Consider the following 417-residue polypeptide: Phosphoribosylamine--glycine ligase (417 aa).

Residues 108-307 (KRIMDEAGVP…LSTLLFAAAT (200 aa)) enclose the ATP-grasp domain. 134-188 (LDEFGAPYVVKADGLAAGKGVIVTEDRAAALAHAARYLTHGSVLVEEFLDGEEVS) is an ATP binding site. Mg(2+) contacts are provided by Glu277 and Asn279.

This sequence belongs to the GARS family. Requires Mg(2+) as cofactor. Mn(2+) serves as cofactor.

It catalyses the reaction 5-phospho-beta-D-ribosylamine + glycine + ATP = N(1)-(5-phospho-beta-D-ribosyl)glycinamide + ADP + phosphate + H(+). It participates in purine metabolism; IMP biosynthesis via de novo pathway; N(1)-(5-phospho-D-ribosyl)glycinamide from 5-phospho-alpha-D-ribose 1-diphosphate: step 2/2. The polypeptide is Phosphoribosylamine--glycine ligase (Leifsonia xyli subsp. xyli (strain CTCB07)).